Reading from the N-terminus, the 296-residue chain is Acetylglutamate kinase (296 aa).

Substrate-binding positions include Gly71 to Gly72, Arg93, and Asn186.

This sequence belongs to the acetylglutamate kinase family. ArgB subfamily.

The protein resides in the cytoplasm. It catalyses the reaction N-acetyl-L-glutamate + ATP = N-acetyl-L-glutamyl 5-phosphate + ADP. The protein operates within amino-acid biosynthesis; L-arginine biosynthesis; N(2)-acetyl-L-ornithine from L-glutamate: step 2/4. Functionally, catalyzes the ATP-dependent phosphorylation of N-acetyl-L-glutamate. In Synechococcus sp. (strain RCC307), this protein is Acetylglutamate kinase.